A 297-amino-acid chain; its full sequence is MAQFPLFQKFQKAIQHPPALSLGLPIFLTVIFLLSQRYVWIEDDLELRSTALTNFELNRISFYPLVHATWFHLLLNLVALQPIVSQFERVNGTVRTGIVLNILAVVTAIPWCLLSIGFFPDEAVLGSSAWIFSFMGYWAIRESSKQPTTQLAPNLVVPTWLLPIIYLVVIAIVIPSSSFIGHLLGLIAGWMMALGYLDVLIEPSSKVVLWIENKISRVIDLIPSSIVTFYREEGALDTRAAARADTNRSLSVSGGNFLGFQANSSQADLEAGTRSRGNSSVDPTTSFPGTGQTLGTQ.

6 helical membrane-spanning segments follow: residues 14-34, 60-80, 98-118, 120-140, 155-175, and 179-199; these read IQHP…IFLL, ISFY…LVAL, IVLN…SIGF, PDEA…YWAI, LVVP…IVIP, and FIGH…YLDV. Ser-128 serves as the catalytic Nucleophile. His-182 is an active-site residue. Residues 268 to 297 form a disordered region; it reads DLEAGTRSRGNSSVDPTTSFPGTGQTLGTQ. Positions 275-297 are enriched in polar residues; the sequence is SRGNSSVDPTTSFPGTGQTLGTQ.

It belongs to the peptidase S54 family.

It is found in the golgi apparatus membrane. The protein localises to the golgi apparatus. The protein resides in the cis-Golgi network membrane. It catalyses the reaction Cleaves type-1 transmembrane domains using a catalytic dyad composed of serine and histidine that are contributed by different transmembrane domains.. Its function is as follows. Probable rhomboid-type serine protease that catalyzes intramembrane proteolysis. The chain is Rhomboid-type serine protease 2 (RBD2) from Yarrowia lipolytica (strain CLIB 122 / E 150) (Yeast).